A 78-amino-acid chain; its full sequence is Surfactant-associated protein 2 (78 aa).

A signal peptide spans 1-19; it reads MGAGLPLVLLLTLVGSSQG. The N-linked (GlcNAc...) asparagine glycan is linked to N37.

N-glycosylated.

It is found in the secreted. Its subcellular location is the cytoplasmic vesicle. The protein localises to the secretory vesicle. It localises to the golgi apparatus. Functionally, putative surfactant protein. This is Surfactant-associated protein 2 (SFTA2) from Bos taurus (Bovine).